A 328-amino-acid chain; its full sequence is MDNASFSEPWPANASGPDPALSCSNASTLAPLPAPLAVAVPVVYAVICAVGLAGNSAVLYVLLRAPRMKTVTNLFILNLAIADELFTLVLPINIADFLLRQWPFGELMCKLIVAIDQYNTFSSLYFLTVMSADRYLVVLATAESRRVAGRTYSAARAVSLAVWGIVTLVVLPFAVFARLDDEQGRRQCVLVFPQPEAFWWRASRLYTLVLGFAIPVSTICVLYTTLLCRLHAMRLDSHAKALERAKKRVTFLVVAILAVCLLCWTPYHLSTVVALTTDLPQTPLVIAISYFITSLSYANSCLNPFLYAFLDASFRRNLRQLITCRAAA.

The Extracellular segment spans residues 1–37 (MDNASFSEPWPANASGPDPALSCSNASTLAPLPAPLA). N-linked (GlcNAc...) asparagine glycans are attached at residues N3, N13, and N25. The chain crosses the membrane as a helical span at residues 38–61 (VAVPVVYAVICAVGLAGNSAVLYV). The Cytoplasmic portion of the chain corresponds to 62–72 (LLRAPRMKTVT). The helical transmembrane segment at 73–97 (NLFILNLAIADELFTLVLPINIADF) threads the bilayer. The Extracellular portion of the chain corresponds to 98 to 112 (LLRQWPFGELMCKLI). A disulfide bond links C109 and C188. Residues 113-132 (VAIDQYNTFSSLYFLTVMSA) traverse the membrane as a helical segment. Residues 133 to 157 (DRYLVVLATAESRRVAGRTYSAARA) are Cytoplasmic-facing. A helical membrane pass occupies residues 158 to 177 (VSLAVWGIVTLVVLPFAVFA). Residues 178 to 202 (RLDDEQGRRQCVLVFPQPEAFWWRA) are Extracellular-facing. Residues 203-224 (SRLYTLVLGFAIPVSTICVLYT) traverse the membrane as a helical segment. Residues 225-248 (TLLCRLHAMRLDSHAKALERAKKR) are Cytoplasmic-facing. A helical membrane pass occupies residues 249–273 (VTFLVVAILAVCLLCWTPYHLSTVV). Over 274 to 283 (ALTTDLPQTP) the chain is Extracellular. The helical transmembrane segment at 284–298 (LVIAISYFITSLSYA) threads the bilayer. The Cytoplasmic portion of the chain corresponds to 299 to 328 (NSCLNPFLYAFLDASFRRNLRQLITCRAAA).

This sequence belongs to the G-protein coupled receptor 1 family. As to expression, found in cerebellum and frontal cortex. Detected at high levels in hippocampus, amygdala and trachea; at moderate levels in fetal brain, pituitary gland and prostate. Not in caudate, accumbens, kidney or liver. Also detected at high levels in lung carcinoma.

The protein resides in the cell membrane. Its function is as follows. Interacts specifically with a number of opioid ligands. Receptor for neuropeptides B and W, which may be involved in neuroendocrine system regulation, food intake and the organization of other signals. Has a higher affinity for neuropeptide B. The polypeptide is Neuropeptides B/W receptor type 1 (NPBWR1) (Homo sapiens (Human)).